The sequence spans 170 residues: ATP synthase subunit b (170 aa).

The chain crosses the membrane as a helical span at residues 4-24; sequence ILLLGLALAPVALFASQGAVE.

Belongs to the ATPase B chain family. F-type ATPases have 2 components, F(1) - the catalytic core - and F(0) - the membrane proton channel. F(1) has five subunits: alpha(3), beta(3), gamma(1), delta(1), epsilon(1). F(0) has three main subunits: a(1), b(2) and c(10-14). The alpha and beta chains form an alternating ring which encloses part of the gamma chain. F(1) is attached to F(0) by a central stalk formed by the gamma and epsilon chains, while a peripheral stalk is formed by the delta and b chains.

The protein resides in the cell inner membrane. In terms of biological role, f(1)F(0) ATP synthase produces ATP from ADP in the presence of a proton or sodium gradient. F-type ATPases consist of two structural domains, F(1) containing the extramembraneous catalytic core and F(0) containing the membrane proton channel, linked together by a central stalk and a peripheral stalk. During catalysis, ATP synthesis in the catalytic domain of F(1) is coupled via a rotary mechanism of the central stalk subunits to proton translocation. Component of the F(0) channel, it forms part of the peripheral stalk, linking F(1) to F(0). The sequence is that of ATP synthase subunit b from Aliarcobacter butzleri (strain RM4018) (Arcobacter butzleri).